Here is a 223-residue protein sequence, read N- to C-terminus: Probable 3-beta-hydroxysteroid-Delta(8),Delta(7)-isomerase (223 aa).

The next 4 helical transmembrane spans lie at I28 to G48, L58 to F78, V115 to A135, and F175 to I195. Residues L54–S196 form the EXPERA domain.

This sequence belongs to the EBP family.

The protein resides in the endoplasmic reticulum membrane. It carries out the reaction lathosterol = 5alpha-cholest-8-en-3beta-ol. Its pathway is steroid biosynthesis; sterol biosynthesis. In terms of biological role, catalyzes the conversion of Delta(8)-sterols to their corresponding Delta(7)-isomers. This Arabidopsis thaliana (Mouse-ear cress) protein is Probable 3-beta-hydroxysteroid-Delta(8),Delta(7)-isomerase.